The chain runs to 202 residues: dTTP/UTP pyrophosphatase (202 aa).

Catalysis depends on D76, which acts as the Proton acceptor.

Belongs to the Maf family. YhdE subfamily. The cofactor is a divalent metal cation.

The protein localises to the cytoplasm. It catalyses the reaction dTTP + H2O = dTMP + diphosphate + H(+). It carries out the reaction UTP + H2O = UMP + diphosphate + H(+). Nucleoside triphosphate pyrophosphatase that hydrolyzes dTTP and UTP. May have a dual role in cell division arrest and in preventing the incorporation of modified nucleotides into cellular nucleic acids. In Neisseria meningitidis serogroup B (strain ATCC BAA-335 / MC58), this protein is dTTP/UTP pyrophosphatase.